The following is a 358-amino-acid chain: ATPase ASNA1 homolog (358 aa).

35–42 contributes to the ATP binding site; that stretch reads KGGVGKTT. Asp-64 is a catalytic residue. Glu-235 and Asn-262 together coordinate ATP.

It belongs to the arsA ATPase family. Homodimer.

The protein resides in the cytoplasm. It localises to the endoplasmic reticulum. ATPase required for the post-translational delivery of tail-anchored (TA) proteins to the endoplasmic reticulum. Recognizes and selectively binds the transmembrane domain of TA proteins in the cytosol. This complex then targets to the endoplasmic reticulum by membrane-bound receptors, where the tail-anchored protein is released for insertion. This process is regulated by ATP binding and hydrolysis. ATP binding drives the homodimer towards the closed dimer state, facilitating recognition of newly synthesized TA membrane proteins. ATP hydrolysis is required for insertion. Subsequently, the homodimer reverts towards the open dimer state, lowering its affinity for the membrane-bound receptor, and returning it to the cytosol to initiate a new round of targeting. This Babesia bovis protein is ATPase ASNA1 homolog.